The following is a 479-amino-acid chain: 6-phosphogluconate dehydrogenase, decarboxylating (479 aa).

NADP(+) is bound by residues 10–15, 33–35, 75–77, and asparagine 103; these read GLAVMG, NRS, and IKA. Residues asparagine 103 and 129–131 each bind substrate; that span reads SGG. Lysine 183 serves as the catalytic Proton acceptor. Position 186–187 (186–187) interacts with substrate; that stretch reads HN. Glutamate 190 serves as the catalytic Proton donor. Residues tyrosine 191, lysine 260, arginine 287, arginine 447, and histidine 453 each contribute to the substrate site.

It belongs to the 6-phosphogluconate dehydrogenase family. In terms of assembly, homodimer.

It carries out the reaction 6-phospho-D-gluconate + NADP(+) = D-ribulose 5-phosphate + CO2 + NADPH. The protein operates within carbohydrate degradation; pentose phosphate pathway; D-ribulose 5-phosphate from D-glucose 6-phosphate (oxidative stage): step 3/3. Its function is as follows. Catalyzes the oxidative decarboxylation of 6-phosphogluconate to ribulose 5-phosphate and CO(2), with concomitant reduction of NADP to NADPH. This is 6-phosphogluconate dehydrogenase, decarboxylating (gnd) from Chlamydia muridarum (strain MoPn / Nigg).